A 524-amino-acid polypeptide reads, in one-letter code: Cytochrome P450 4F3 (524 aa).

Residues 19–39 (WLLLLLAGASCLLAYILTPIY) form a helical membrane-spanning segment. Cys-468 serves as a coordination point for heme.

Belongs to the cytochrome P450 family. The cofactor is heme. As to expression, highest level in polymorphonuclear leukocytes and dendritic cells. Detectable in lymph nodes, spleen, bone marrow and peripheral blood. Highly expressed in ovary. Very low level in liver, kidney, and smooth muscle. Expressed in neutrophils (at protein level).

The protein resides in the endoplasmic reticulum membrane. Its subcellular location is the microsome membrane. It carries out the reaction leukotriene B4 + reduced [NADPH--hemoprotein reductase] + O2 = 18-hydroxy-leukotriene B4 + oxidized [NADPH--hemoprotein reductase] + H2O + H(+). It catalyses the reaction leukotriene B4 + reduced [NADPH--hemoprotein reductase] + O2 = 19-hydroxy-leukotriene B4 + oxidized [NADPH--hemoprotein reductase] + H2O + H(+). The protein operates within lipid metabolism; leukotriene B4 degradation. Its function is as follows. A cytochrome P450 monooxygenase involved in the metabolism of the pro-inflammatory lipid mediator leukotriene B4 (LTB4). Hydroxylates at the omega-1 and omega-2 positions LTB4. This oxidation step leads to LTB4 inactivation, which is postulated to be a crucial part of the resolution of inflammation. Mechanistically, uses molecular oxygen inserting one oxygen atom into a substrate, and reducing the second into a water molecule, with two electrons provided by NADPH via cytochrome P450 reductase (CPR; NADPH-ferrihemoprotein reductase). This chain is Cytochrome P450 4F3, found in Mus musculus (Mouse).